A 183-amino-acid polypeptide reads, in one-letter code: Putative manganese efflux pump MntP 1 (183 aa).

6 helical membrane passes run 6–26 (LFLL…CIGI), 36–56 (MIFV…GGYI), 64–84 (IVPI…ILMI), 100–120 (IMYL…GFTT), 130–150 (LFMS…LGII), and 158–178 (ISII…LFGL).

Belongs to the MntP (TC 9.B.29) family.

Its subcellular location is the cell membrane. Functionally, probably functions as a manganese efflux pump. The chain is Putative manganese efflux pump MntP 1 from Clostridium botulinum (strain Hall / ATCC 3502 / NCTC 13319 / Type A).